The chain runs to 436 residues: MTVTSDFTQKLYENFAENTKLRAVENAVTKNGLLSSLEVRGSHAANLPEFSLDLTKDPVTNQKQSGRCWMFAALNTFRHKFINEFKTEDFEFSQAYTFFWDKYEKSNWFMEQIIGDVAMDDRRLKFLLQTPQQDGGQWDMMVAIFDKYGIVPKAVYPESQASSSSRELNQYLNKLLRQDAEILRYTIEQDGDVQAVKEELLQEVFNFLAVTLGLPPQNFEFAFRNKDNEYKKFVGTPKEFYNEYVGIDLNNYVSVINAPTADKPYNKSYTVEFLGNVVGGKEVKHLNVEMDRFKKLAIAQMQAGETVWFGCDVGQESNRSAGLLTMDSYDFKSSLDIEFTQSKAGRLDYGESLMTHAMVLAGVDLDADGNSTKWKVENSWGKDAGQKGYFVASDEWMDEYTYQIVVRKDLLSEEELAAYEAKPQVLLPWDPMGALA.

Residues Cys68, His356, and Asn378 contribute to the active site.

This sequence belongs to the peptidase C1 family. As to quaternary structure, homohexamer.

It catalyses the reaction Inactivates bleomycin B2 (a cytotoxic glycometallopeptide) by hydrolysis of a carboxyamide bond of beta-aminoalanine, but also shows general aminopeptidase activity. The specificity varies somewhat with source, but amino acid arylamides of Met, Leu and Ala are preferred.. Hydrolyzes naphthylamide-substituted amino acids as well as di- and tripeptides in which the half-cystine residue is involved in a disulfide loop, notably in oxytocin and vasopressin. Also has a bleomycin hydrolase activity. The polypeptide is Aminopeptidase C (pepC) (Lactococcus lactis subsp. cremoris (Streptococcus cremoris)).